The following is a 363-amino-acid chain: MQGANLKVLPSTRAAAKELVDPLDITNVGWSTLEPKFDELMQLMDAPSSGINALAARSAHREKVGAVIEQLLTRAQDESRRLLVEGNGEAAAEAGVKTLRLKERFYGKGSVKLVPAHFHLARTNQFLKRYGNAEEILSLAHFIILQNPDEADATIKAELHQTFGLLYAADNKLDVSVKHLTCATYYLSVMNGPEHVLTTFAYFDLANVFATKACMEAAMALYDTVKNIWLKHLRRVLKDIVDETMAAKLVKRYDDDEVTHEVGHASARAFGKENLADVSKMLFGIFSIQKERLTISHPTTARAQFLLGLYLLWVNKNDEAAEHLLSARTTSQKFYGERHPIVQDIEDWCIWFEIPFRGVAAEQ.

Residues 129–363 form a required for localization to the flagellum and for flagellar motility region; the sequence is RYGNAEEILS…IPFRGVAAEQ (235 aa). 2 TPR repeats span residues 157–190 and 199–232; these read AELHQTFGLLYAADNKLDVSVKHLTCATYYLSVM and TFAYFDLANVFATKACMEAAMALYDTVKNIWLKH.

In terms of assembly, interacts with TTC29.

Its subcellular location is the cytoplasm. The protein resides in the cytoskeleton. It is found in the flagellum axoneme. Functionally, required for flagellum motility. The chain is Protein TAX-1 from Trypanosoma brucei brucei (strain 927/4 GUTat10.1).